Reading from the N-terminus, the 541-residue chain is Membrane protein insertase YidC (541 aa).

Residues 6–26 (SLLVLALIFISFLVYQQWQLD) form a helical membrane-spanning segment. Residues 34–56 (EQTTSITATSDVPASSPSNSQAI) are disordered. The next 4 helical transmembrane spans lie at 337–357 (FWLL…IICV), 416–436 (LGGC…YWTF), 454–474 (LSAQ…MFLL), and 495–515 (PLIF…YWLV).

Belongs to the OXA1/ALB3/YidC family. Type 1 subfamily. Interacts with the Sec translocase complex via SecD. Specifically interacts with transmembrane segments of nascent integral membrane proteins during membrane integration.

It is found in the cell inner membrane. In terms of biological role, required for the insertion and/or proper folding and/or complex formation of integral membrane proteins into the membrane. Involved in integration of membrane proteins that insert both dependently and independently of the Sec translocase complex, as well as at least some lipoproteins. Aids folding of multispanning membrane proteins. The sequence is that of Membrane protein insertase YidC from Haemophilus influenzae (strain PittEE).